Consider the following 906-residue polypeptide: Cadherin-2 (906 aa).

The signal sequence occupies residues 1–25 (MCRIAGAPRTLLPLLAALLQASVEA). Positions 26-159 (SGEIALCKTG…HNGYLQRQKR (134 aa)) are excised as a propeptide. Phosphoserine is present on residues Ser96 and Ser135. Cadherin domains lie at 160–267 (DWVI…RPEF), 268–382 (LHQV…PPEF), 383–497 (TAMT…NPYF), 498–603 (APNP…DNAP), and 604–714 (QVLP…DVDR). The Extracellular segment spans residues 160-724 (DWVIPPINLP…IVGAGLGTGA (565 aa)). Glu170 contributes to the Ca(2+) binding site. N-linked (GlcNAc...) asparagine glycosylation occurs at Asn190. Ca(2+) is bound by residues Asp226, Glu228, Asp259, Met260, Asn261, Asp262, and Asn263. Residue Asn273 is glycosylated (N-linked (GlcNAc...) asparagine). Residues Asp293, Asp295, and Asn301 each coordinate Ca(2+). A glycan (N-linked (GlcNAc...) asparagine) is linked at Asn325. Asp353 is a Ca(2+) binding site. Asn402, Asn572, Asn622, Asn651, and Asn692 each carry an N-linked (GlcNAc...) asparagine glycan. A helical transmembrane segment spans residues 725 to 745 (IIAILLCIIILLILVLMFVVW). Residues 746–906 (MKRRDKERQA…LAEMYGGGDD (161 aa)) are Cytoplasmic-facing. The span at 863–880 (SGSTAGSLSSLNSSSSGG) shows a compositional bias: low complexity. The tract at residues 863–884 (SGSTAGSLSSLNSSSSGGEQDY) is disordered.

As to quaternary structure, homodimer (via extracellular region). Can also form heterodimers with other cadherins (via extracellular region). Dimerization occurs in trans, i.e. with a cadherin chain from another cell. Interacts with CDCP1. Interacts with PCDH8; this complex may also include TAOK2. The interaction with PCDH8 may lead to internalization through TAOK2/p38 MAPK pathway. Identified in a complex containing FGFR4, NCAM1, CDH2, PLCG1, FRS2, SRC, SHC1, GAP43 and CTTN. May interact with OBSCN (via protein kinase domain 2). Interacts with FBXO45. In terms of processing, cleaved by MMP24. Ectodomain cleavage leads to the generation of a soluble 90 kDa N-terminal soluble fragment and a 45 kDa membrane-bound C-terminal fragment 1 (CTF1), which is further cleaved by gamma-secretase into a 35 kDa. Cleavage in neural stem cells by MMP24 affects CDH2-mediated anchorage of neural stem cells to ependymocytes in the adult subependymal zone, leading to modulate neural stem cell quiescence. Post-translationally, may be phosphorylated by OBSCN.

The protein localises to the cell membrane. Its subcellular location is the sarcolemma. It localises to the cell junction. It is found in the cell surface. The protein resides in the desmosome. The protein localises to the adherens junction. In terms of biological role, calcium-dependent cell adhesion protein; preferentially mediates homotypic cell-cell adhesion by dimerization with a CDH2 chain from another cell. Cadherins may thus contribute to the sorting of heterogeneous cell types. Acts as a regulator of neural stem cells quiescence by mediating anchorage of neural stem cells to ependymocytes in the adult subependymal zone: upon cleavage by MMP24, CDH2-mediated anchorage is affected, leading to modulate neural stem cell quiescence. Plays a role in cell-to-cell junction formation between pancreatic beta cells and neural crest stem (NCS) cells, promoting the formation of processes by NCS cells. Required for proper neurite branching. Required for pre- and postsynaptic organization. CDH2 may be involved in neuronal recognition mechanism. In hippocampal neurons, may regulate dendritic spine density. The sequence is that of Cadherin-2 (CDH2) from Otolemur garnettii (Small-eared galago).